Reading from the N-terminus, the 400-residue chain is PHD finger protein 24 (400 aa).

Gly-2 carries N-myristoyl glycine lipidation. Basic and acidic residues predominate over residues 29–38 (RDRPSIRRGG). The tract at residues 29-65 (RDRPSIRRGGELPGSRRGTVEGSVQEVQEEKEAEASA) is disordered. An Omega-N-methylarginine modification is found at Arg-36. Ser-43 is subject to Phosphoserine. Phosphothreonine is present on Thr-47. Ser-51 carries the phosphoserine modification. The PHD-type zinc finger occupies 129-190 (NDEMCDVCEV…TGWSCYYCDN (62 aa)). Arg-307 is modified (omega-N-methylarginine).

This Mus musculus (Mouse) protein is PHD finger protein 24.